Consider the following 430-residue polypeptide: Protein IQ-DOMAIN 3 (430 aa).

The tract at residues 1–36 (MGKSWFSAVKKALSPEPKQKKEQKPHKSKKWFGKSK) is disordered. A Nuclear localization signal 1 motif is present at residues 9–16 (VKKALSPE). Basic residues predominate over residues 23–35 (QKPHKSKKWFGKS). Residues 107-135 (EEIAAIKIQTAFRGYMARRALRALRGLVR) enclose the IQ domain. Positions 170 to 224 (RLRLSEDKQALTRQLQQKHNKDFDKTGENWNDSTLSREKVEANMLNKQVATMRRE) form a coiled coil. A calmodulin-binding region spans residues 213 to 231 (MLNKQVATMRREKALAYAF). Disordered stretches follow at residues 271-368 (ENHS…SQSV) and 385-430 (SNLS…TNLA). Over residues 286 to 295 (ARSVASRAMS) the composition is skewed to low complexity. Over residues 326-340 (SEDSNSIVSFQSEQP) the composition is skewed to polar residues. The Nuclear localization signal 2 motif lies at 396-403 (AKKRLSFS).

Belongs to the IQD family. In terms of assembly, binds to multiple calmodulin (CaM) in the presence of Ca(2+) and CaM-like proteins.

The protein resides in the nucleus. It is found in the nucleolus. It localises to the cytoplasm. Its subcellular location is the cytoskeleton. Its function is as follows. May be involved in cooperative interactions with calmodulins or calmodulin-like proteins. Recruits calmodulin proteins to microtubules, thus being a potential scaffold in cellular signaling and trafficking. May associate with nucleic acids and regulate gene expression at the transcriptional or post-transcriptional level. The polypeptide is Protein IQ-DOMAIN 3 (Arabidopsis thaliana (Mouse-ear cress)).